The chain runs to 243 residues: MSRAPLPLAAHERLIFALDVPGHDEAIAWVDRLGDSVSFYKIGMELLASGEYFHVLDALAKRDKRVFVDLKFFDIPATVAGTIRRLAQWPVSYCTVHGWHAGMLQAAAEANHGDMRLLAVTVLTSMGRPDLAAMGIDREPVDVVVERALAAQAAGIDGVIASGQEAGPIRRATGPDFSIVCPGIRPGGPVGDDQQRTVGVAQAFTDGADAIVVGRPIRQASDPAAAATAIQDEIRAALPQNGN.

Residues aspartate 19, lysine 41, 69 to 78, threonine 124, arginine 185, glutamine 194, glycine 214, and arginine 215 each bind substrate; that span reads DLKFFDIPAT. Lysine 71 functions as the Proton donor in the catalytic mechanism.

The protein belongs to the OMP decarboxylase family. Type 1 subfamily. Homodimer.

The enzyme catalyses orotidine 5'-phosphate + H(+) = UMP + CO2. The protein operates within pyrimidine metabolism; UMP biosynthesis via de novo pathway; UMP from orotate: step 2/2. Catalyzes the decarboxylation of orotidine 5'-monophosphate (OMP) to uridine 5'-monophosphate (UMP). The sequence is that of Orotidine 5'-phosphate decarboxylase from Xanthomonas euvesicatoria pv. vesicatoria (strain 85-10) (Xanthomonas campestris pv. vesicatoria).